The following is a 579-amino-acid chain: Isocitrate dehydrogenase kinase/phosphatase (579 aa).

ATP is bound by residues 324 to 330 (ADGTPGM) and lysine 345. Residue aspartate 380 is part of the active site.

The protein belongs to the AceK family.

It is found in the cytoplasm. It catalyses the reaction L-seryl-[isocitrate dehydrogenase] + ATP = O-phospho-L-seryl-[isocitrate dehydrogenase] + ADP + H(+). Bifunctional enzyme which can phosphorylate or dephosphorylate isocitrate dehydrogenase (IDH) on a specific serine residue. This is a regulatory mechanism which enables bacteria to bypass the Krebs cycle via the glyoxylate shunt in response to the source of carbon. When bacteria are grown on glucose, IDH is fully active and unphosphorylated, but when grown on acetate or ethanol, the activity of IDH declines drastically concomitant with its phosphorylation. This is Isocitrate dehydrogenase kinase/phosphatase from Xanthomonas axonopodis pv. citri (strain 306).